The primary structure comprises 90 residues: Acylphosphatase (90 aa).

In terms of domain architecture, Acylphosphatase-like spans 4 to 90 (TVHLRITGHV…KGQYKDFRIY (87 aa)). Catalysis depends on residues R19 and N37.

This sequence belongs to the acylphosphatase family.

It catalyses the reaction an acyl phosphate + H2O = a carboxylate + phosphate + H(+). This chain is Acylphosphatase (acyP), found in Caldanaerobacter subterraneus subsp. tengcongensis (strain DSM 15242 / JCM 11007 / NBRC 100824 / MB4) (Thermoanaerobacter tengcongensis).